The chain runs to 245 residues: 1-(5-phosphoribosyl)-5-[(5-phosphoribosylamino)methylideneamino] imidazole-4-carboxamide isomerase (245 aa).

The active-site Proton acceptor is the Asp7. Catalysis depends on Asp129, which acts as the Proton donor.

The protein belongs to the HisA/HisF family.

The protein localises to the cytoplasm. The enzyme catalyses 1-(5-phospho-beta-D-ribosyl)-5-[(5-phospho-beta-D-ribosylamino)methylideneamino]imidazole-4-carboxamide = 5-[(5-phospho-1-deoxy-D-ribulos-1-ylimino)methylamino]-1-(5-phospho-beta-D-ribosyl)imidazole-4-carboxamide. The protein operates within amino-acid biosynthesis; L-histidine biosynthesis; L-histidine from 5-phospho-alpha-D-ribose 1-diphosphate: step 4/9. This Vibrio vulnificus (strain CMCP6) protein is 1-(5-phosphoribosyl)-5-[(5-phosphoribosylamino)methylideneamino] imidazole-4-carboxamide isomerase.